The chain runs to 274 residues: Large ribosomal subunit protein uL2 (274 aa).

Disordered regions lie at residues 28 to 54 (APHA…TRHI) and 224 to 274 (VAMN…RRRK). A compositionally biased stretch (basic and acidic residues) spans 263–274 (KRTDKMIVRRRK).

It belongs to the universal ribosomal protein uL2 family. Part of the 50S ribosomal subunit. Forms a bridge to the 30S subunit in the 70S ribosome.

Its function is as follows. One of the primary rRNA binding proteins. Required for association of the 30S and 50S subunits to form the 70S ribosome, for tRNA binding and peptide bond formation. It has been suggested to have peptidyltransferase activity; this is somewhat controversial. Makes several contacts with the 16S rRNA in the 70S ribosome. The protein is Large ribosomal subunit protein uL2 of Pseudomonas fluorescens (strain SBW25).